We begin with the raw amino-acid sequence, 231 residues long: Aquaporin Z (231 aa).

2 helical membrane-spanning segments follow: residues 9 to 29 (LLGT…AAAF) and 34 to 54 (IGFV…IYAV). An NPA 1 motif is present at residues 63–65 (NPA). 3 helical membrane passes run 82–102 (IPYI…LYVI), 133–153 (SAIV…IGAT), and 160–180 (GFAP…SIPI). Positions 186-188 (NPA) match the NPA 2 motif. The chain crosses the membrane as a helical span at residues 202 to 222 (LEQLWFFWVMPIIGGIVGGGI).

Belongs to the MIP/aquaporin (TC 1.A.8) family. As to quaternary structure, homotetramer.

It is found in the cell inner membrane. The enzyme catalyses H2O(in) = H2O(out). In terms of biological role, channel that permits osmotically driven movement of water in both directions. It is involved in the osmoregulation and in the maintenance of cell turgor during volume expansion in rapidly growing cells. It mediates rapid entry or exit of water in response to abrupt changes in osmolarity. This Photorhabdus laumondii subsp. laumondii (strain DSM 15139 / CIP 105565 / TT01) (Photorhabdus luminescens subsp. laumondii) protein is Aquaporin Z.